Reading from the N-terminus, the 138-residue chain is Small ribosomal subunit protein uS11c (138 aa).

The segment at 1–22 (MAKAIPKISSRRNGRIGSRKGA) is disordered. Basic residues predominate over residues 9–22 (SSRRNGRIGSRKGA).

This sequence belongs to the universal ribosomal protein uS11 family. In terms of assembly, part of the 30S ribosomal subunit.

The protein resides in the plastid. It is found in the chloroplast. The chain is Small ribosomal subunit protein uS11c from Nicotiana tabacum (Common tobacco).